Reading from the N-terminus, the 304-residue chain is Energy-coupling factor transporter ATP-binding protein EcfA2 (304 aa).

Residues 3-261 (IIVKNISYIY…EKFLVENKLK (259 aa)) enclose the ABC transporter domain. Residue 40–47 (GSTGSGKT) participates in ATP binding.

It belongs to the ABC transporter superfamily. Energy-coupling factor EcfA family. Forms a stable energy-coupling factor (ECF) transporter complex composed of 2 membrane-embedded substrate-binding proteins (S component), 2 ATP-binding proteins (A component) and 2 transmembrane proteins (T component).

Its subcellular location is the cell membrane. Functionally, ATP-binding (A) component of a common energy-coupling factor (ECF) ABC-transporter complex. Unlike classic ABC transporters this ECF transporter provides the energy necessary to transport a number of different substrates. The chain is Energy-coupling factor transporter ATP-binding protein EcfA2 from Mycoplasmopsis pulmonis (strain UAB CTIP) (Mycoplasma pulmonis).